Reading from the N-terminus, the 370-residue chain is Muconate cycloisomerase 1 (370 aa).

Lys166 is a catalytic residue. Positions 195, 221, and 246 each coordinate Mn(2+).

This sequence belongs to the mandelate racemase/muconate lactonizing enzyme family. Homooctamer. The cofactor is Mn(2+).

The enzyme catalyses (S)-muconolactone = cis,cis-muconate + H(+). It functions in the pathway aromatic compound metabolism; beta-ketoadipate pathway; 5-oxo-4,5-dihydro-2-furylacetate from catechol: step 2/3. In terms of biological role, catalyzes a syn cycloisomerization. The sequence is that of Muconate cycloisomerase 1 (catB) from Acinetobacter baylyi (strain ATCC 33305 / BD413 / ADP1).